We begin with the raw amino-acid sequence, 551 residues long: Interferon-induced, double-stranded RNA-activated protein kinase (551 aa).

At alanine 2 the chain carries N-acetylalanine. A (Microbial infection) Interaction with HCV NS5A region spans residues 2 to 180 (AGDLSAGFFM…SVKSDYLSSG (179 aa)). A DRBM 1 domain is found at 9 to 77 (FFMEELNTYR…AKLAVEILNK (69 aa)). Lysine 69 participates in a covalent cross-link: Glycyl lysine isopeptide (Lys-Gly) (interchain with G-Cter in ISG15). Position 83 is a phosphoserine (serine 83). Residues threonine 88, threonine 89, and threonine 90 each carry the phosphothreonine; by autocatalysis modification. In terms of domain architecture, DRBM 2 spans 100-167 (NYIGLINRIA…AKLAYLQILS (68 aa)). Tyrosine 101 bears the Phosphotyrosine; by autocatalysis mark. A Glycyl lysine isopeptide (Lys-Gly) (interchain with G-Cter in ISG15) cross-link involves residue lysine 159. Phosphotyrosine; by autocatalysis is present on tyrosine 162. Residues 202 to 215 (SSSEGDFSADTSEI) are compositionally biased toward polar residues. The interval 202 to 222 (SSSEGDFSADTSEINSNSDSL) is disordered. A Phosphoserine; by autocatalysis modification is found at serine 242. A phosphothreonine; by autocatalysis mark is found at threonine 255 and threonine 258. A dimerization region spans residues 266 to 362 (DFKEIELIGS…NSSRSKTKCL (97 aa)). The tract at residues 266 to 551 (DFKEIELIGS…SPEKNERHTC (286 aa)) is interaction with TRAF5. One can recognise a Protein kinase domain in the interval 267 to 538 (FKEIELIGSG…TSEILRTLTV (272 aa)). 273 to 281 (IGSGGFGQV) contacts ATP. A Phosphotyrosine; by autocatalysis modification is found at tyrosine 293. An ATP-binding site is contributed by lysine 296. Repeat copies occupy residues 331–343 (DYDP…SLES) and 345–357 (DYDP…SSRS). Residues 331–357 (DYDPETSDDSLESSDYDPENSKNSSRS) are 2 X 13 AA approximate repeats. The interval 379 to 496 (EKRRGEKLDK…TAFETSKFFT (118 aa)) is interaction with EIF2S1/EIF-2ALPHA. Aspartate 414 acts as the Proton acceptor in catalysis. Aspartate 432 contributes to the Mg(2+) binding site. Phosphothreonine; by autocatalysis occurs at positions 446 and 451. 2 positions are modified to phosphoserine: serine 456 and serine 542.

The protein belongs to the protein kinase superfamily. Ser/Thr protein kinase family. GCN2 subfamily. In terms of assembly, homodimer. Interacts with STRBP. Interacts with DNAJC3. Forms a complex with FANCA, FANCC, FANCG and HSP70. Interacts with ADAR/ADAR1. Interacts with IRS1. The inactive form interacts with NCK1 and GSN. Interacts (via the kinase catalytic domain) with STAT3 (via SH2 domain), TRAF2 (C-terminus), TRAF5 (C-terminus) and TRAF6 (C-terminus). Interacts with MAP2K6, IKBKB/IKKB, NPM1, TARBP2, NLRP1, NLRP3, NLRC4 and AIM2. Interacts (via DRBM 1 domain) with DUS2L (via DRBM domain). Interacts with DHX9 (via N-terminus) and this interaction is dependent upon activation of the kinase. Interacts with EIF2S1/EIF-2ALPHA; this interaction induces a conformational change in EIF2S1 and its phosphorylation by EIF2AK2. (Microbial infection) Interacts with human cytomegalovirus (HCMV) TRS1; this interaction retains EIF2AK2 to the nucleus and prevents its activation. As to quaternary structure, (Microbial infection) Interacts with vaccinia virus protein K3 (K3L); this interaction inhibits EIF2AK2. In terms of assembly, (Microbial infection) Interacts with human herpes simplex virus 1 (HHV-1) protein US11 in an RNA-dependent manner. (Microbial infection) The inactive form interacts with Toscana virus (TOS) NSS. As to quaternary structure, (Microbial infection) Interacts with herpes virus 8 protein v-IRF2; this interaction inhibits EIF2AK2 activation. In terms of assembly, (Microbial infection) Interacts with vaccinia protein E3. (Microbial infection) Interacts (via N-terminus) with Hepatitis C virus (HCV) mature core protein (via N-terminus); this interaction induces the autophosphorylation of EIF2AK2. As to quaternary structure, (Microbial infection) Interacts with Hepatitis C virus (HCV) non-structural protein 5A (NS5A); this interaction leads to disruption of EIF2AK2 dimerization by NS5A. In terms of assembly, (Microbial infection) Interacts with Hepatitis C virus (HCV) envelope glycoprotein E2; this interaction inhibits EIF2AK2 and blocks its inhibitory effect on protein synthesis and cell growth. (Microbial infection) Interacts with human respiratory syncytial virus (HRSV) nucleoprotein; this interaction inhibits EIF2AK2 phosphorylation of EIF2S1 and blocks EIF2AK2-mediated translation shutoff. As to quaternary structure, (Microbial infection) Interacts with human herpesvirus 8 protein MTA/ORF57; this interaction inhibits stress granule formation. The cofactor is Mg(2+). In terms of processing, autophosphorylated on several Ser, Thr and Tyr residues. Autophosphorylation of Thr-451 is dependent on Thr-446 and is stimulated by dsRNA binding and dimerization. Autophosphorylation apparently leads to the activation of the kinase. Tyrosine autophosphorylation is essential for efficient dsRNA-binding, dimerization, and kinase activation. Highly expressed in thymus, spleen and bone marrow compared to non-hematopoietic tissues such as small intestine, liver, or kidney tissues. Colocalizes with GSK3B and TAU in the Alzheimer disease (AD) brain. Elevated levels seen in breast and colon carcinomas, and which correlates with tumor progression and invasiveness or risk of progression.

It localises to the cytoplasm. Its subcellular location is the nucleus. It is found in the perinuclear region. The enzyme catalyses L-seryl-[protein] + ATP = O-phospho-L-seryl-[protein] + ADP + H(+). The catalysed reaction is L-threonyl-[protein] + ATP = O-phospho-L-threonyl-[protein] + ADP + H(+). It carries out the reaction L-tyrosyl-[protein] + ATP = O-phospho-L-tyrosyl-[protein] + ADP + H(+). With respect to regulation, initially produced in an inactive form and is activated by binding to viral dsRNA, which causes dimerization and autophosphorylation in the activation loop and stimulation of function. ISGylation can activate it in the absence of viral infection. Can also be activated by heparin, pro-inflammatory stimuli, growth factors, cytokines, oxidative stress and the cellular protein PRKRA. Activity is markedly stimulated by manganese ions. Activation is blocked by the viral components HIV-1 Tat protein and large amounts of HIV-1 trans-activation response (TAR) RNA element as well as by the cellular proteins TARBP2, DUS2L, NPM1, NCK1 and ADAR. Down-regulated by Toscana virus (TOS) and Rift valley fever virus (RVFV) NSS which promote its proteasomal degradation. Inhibited by vaccinia virus protein E3, probably via dsRNA sequestering. Functionally, IFN-induced dsRNA-dependent serine/threonine-protein kinase that phosphorylates the alpha subunit of eukaryotic translation initiation factor 2 (EIF2S1/eIF-2-alpha) and plays a key role in the innate immune response to viral infection. Inhibits viral replication via the integrated stress response (ISR): EIF2S1/eIF-2-alpha phosphorylation in response to viral infection converts EIF2S1/eIF-2-alpha in a global protein synthesis inhibitor, resulting to a shutdown of cellular and viral protein synthesis, while concomitantly initiating the preferential translation of ISR-specific mRNAs, such as the transcriptional activator ATF4. Exerts its antiviral activity on a wide range of DNA and RNA viruses including hepatitis C virus (HCV), hepatitis B virus (HBV), measles virus (MV) and herpes simplex virus 1 (HHV-1). Also involved in the regulation of signal transduction, apoptosis, cell proliferation and differentiation: phosphorylates other substrates including p53/TP53, PPP2R5A, DHX9, ILF3, IRS1 and the HHV-1 viral protein US11. In addition to serine/threonine-protein kinase activity, also has tyrosine-protein kinase activity and phosphorylates CDK1 at 'Tyr-4' upon DNA damage, facilitating its ubiquitination and proteasomal degradation. Either as an adapter protein and/or via its kinase activity, can regulate various signaling pathways (p38 MAP kinase, NF-kappa-B and insulin signaling pathways) and transcription factors (JUN, STAT1, STAT3, IRF1, ATF3) involved in the expression of genes encoding pro-inflammatory cytokines and IFNs. Activates the NF-kappa-B pathway via interaction with IKBKB and TRAF family of proteins and activates the p38 MAP kinase pathway via interaction with MAP2K6. Can act as both a positive and negative regulator of the insulin signaling pathway (ISP). Negatively regulates ISP by inducing the inhibitory phosphorylation of insulin receptor substrate 1 (IRS1) at 'Ser-312' and positively regulates ISP via phosphorylation of PPP2R5A which activates FOXO1, which in turn up-regulates the expression of insulin receptor substrate 2 (IRS2). Can regulate NLRP3 inflammasome assembly and the activation of NLRP3, NLRP1, AIM2 and NLRC4 inflammasomes. Plays a role in the regulation of the cytoskeleton by binding to gelsolin (GSN), sequestering the protein in an inactive conformation away from actin. The protein is Interferon-induced, double-stranded RNA-activated protein kinase (EIF2AK2) of Homo sapiens (Human).